A 158-amino-acid chain; its full sequence is MNDLPFWKSKTLAEMTAPEWESLCDGCGLCCLNKLEEWDSGDIYFTSVSCKLLDGESCRCSSYENRWDFVPDCVQLTKENVPDIAWLPPTCGYRLINEGRDLYWWHPLVSGDPETVHAAGISARGRTISETEIDIEDLEDYVVDWPLTVGEEKDEEEA.

It belongs to the UPF0260 family.

The sequence is that of UPF0260 protein RHECIAT_CH0001358 from Rhizobium etli (strain CIAT 652).